A 280-amino-acid polypeptide reads, in one-letter code: Ribosomal RNA small subunit methyltransferase A (280 aa).

Residues His15, Leu17, Gly42, Glu64, Asp89, and Asn109 each coordinate S-adenosyl-L-methionine.

The protein belongs to the class I-like SAM-binding methyltransferase superfamily. rRNA adenine N(6)-methyltransferase family. RsmA subfamily.

It localises to the cytoplasm. The enzyme catalyses adenosine(1518)/adenosine(1519) in 16S rRNA + 4 S-adenosyl-L-methionine = N(6)-dimethyladenosine(1518)/N(6)-dimethyladenosine(1519) in 16S rRNA + 4 S-adenosyl-L-homocysteine + 4 H(+). Its function is as follows. Specifically dimethylates two adjacent adenosines (A1518 and A1519) in the loop of a conserved hairpin near the 3'-end of 16S rRNA in the 30S particle. May play a critical role in biogenesis of 30S subunits. This Prochlorococcus marinus (strain MIT 9313) protein is Ribosomal RNA small subunit methyltransferase A.